A 724-amino-acid polypeptide reads, in one-letter code: Probable metal-nicotianamine transporter YSL13 (724 aa).

The disordered stretch occupies residues 1–54 (MATVPTPSEAHGGATPTAADVEMVEASELRRRGKPSGDRATGPSRDGAAAAAEE). A run of 14 helical transmembrane segments spans residues 80–100 (AFVVSFFLVIMFSVIVMKLNL), 103–123 (GIIPSLNVSAGLLGFFFVRLW), 148–168 (CVVAGYDIAFSGGFGNYILSM), 190–210 (LGWIIGFLFLVSFIGLFGLVP), 252–272 (LGIFFILSFFWGFFQWFYTAT), 310–330 (IVNVSVLLGGILSWGIMWPLI), 355–375 (VFIAIALILGDGLYNFLKMII), 423–443 (IPWYVAYGGYAVVAAISIGTV), 455–475 (ILVAYIVAPILAFCNAYGTGL), 487–507 (LAIFAFGAWTGASHGGVLAGL), 541–561 (FVSQVIGTAMGCVIAPCVFWL), 603–623 (LNLCYAFFAAAIVVNLIRDLV), 640–660 (FYIGSYFAIDMFIGTVILFVW), and 675–695 (VASGMICGDGIWVLPQSVLAL).

It belongs to the YSL (TC 2.A.67.2) family. As to expression, expressed in leaves and at low levels in root cortex.

Its subcellular location is the membrane. Functionally, may be involved in the transport of nicotianamine-chelated metals. The protein is Probable metal-nicotianamine transporter YSL13 (YSL13) of Oryza sativa subsp. japonica (Rice).